The sequence spans 491 residues: Trigger factor (491 aa).

The 88-residue stretch at 173-260 (GDVAVVSFSG…LDELKGRELP (88 aa)) folds into the PPIase FKBP-type domain. Positions 435-491 (MVDPASEDKPAKASKAKSSKAKAEKEPAAEGQAKAKPAAKTSKSKTKAAEKLITPID) are disordered. Residues 463-475 (AEGQAKAKPAAKT) are compositionally biased toward low complexity.

This sequence belongs to the FKBP-type PPIase family. Tig subfamily.

It is found in the cytoplasm. It carries out the reaction [protein]-peptidylproline (omega=180) = [protein]-peptidylproline (omega=0). Functionally, involved in protein export. Acts as a chaperone by maintaining the newly synthesized protein in an open conformation. Functions as a peptidyl-prolyl cis-trans isomerase. This is Trigger factor from Synechococcus sp. (strain RCC307).